The following is a 335-amino-acid chain: Tetraacyldisaccharide 4'-kinase (335 aa).

51–58 (HVGGAGKT) lines the ATP pocket.

Belongs to the LpxK family.

The enzyme catalyses a lipid A disaccharide + ATP = a lipid IVA + ADP + H(+). Its pathway is glycolipid biosynthesis; lipid IV(A) biosynthesis; lipid IV(A) from (3R)-3-hydroxytetradecanoyl-[acyl-carrier-protein] and UDP-N-acetyl-alpha-D-glucosamine: step 6/6. Transfers the gamma-phosphate of ATP to the 4'-position of a tetraacyldisaccharide 1-phosphate intermediate (termed DS-1-P) to form tetraacyldisaccharide 1,4'-bis-phosphate (lipid IVA). The sequence is that of Tetraacyldisaccharide 4'-kinase from Bradyrhizobium sp. (strain ORS 278).